Here is a 126-residue protein sequence, read N- to C-terminus: UPF0325 protein PBPRA2971 (126 aa).

The protein belongs to the UPF0325 family.

The chain is UPF0325 protein PBPRA2971 from Photobacterium profundum (strain SS9).